The following is a 232-amino-acid chain: Large ribosomal subunit protein uL1 (232 aa).

Belongs to the universal ribosomal protein uL1 family. As to quaternary structure, part of the 50S ribosomal subunit.

In terms of biological role, binds directly to 23S rRNA. The L1 stalk is quite mobile in the ribosome, and is involved in E site tRNA release. Functionally, protein L1 is also a translational repressor protein, it controls the translation of the L11 operon by binding to its mRNA. In Francisella tularensis subsp. holarctica (strain LVS), this protein is Large ribosomal subunit protein uL1.